The following is a 289-amino-acid chain: CBY1-interacting BAR domain-containing protein 1 (289 aa).

A mitochondrion-targeting transit peptide spans 1 to 47; the sequence is MMRRTLENRNAQTKQLQTAVSNVEKHFGELCQIFAAYVRKTARLRDK. A BAR-like region spans residues 10-220; sequence NAQTKQLQTA…NIDEDEDLEV (211 aa). Residues 107 to 178 adopt a coiled-coil conformation; that stretch reads KMKRDDLKAT…INNFERQKMK (72 aa). A disordered region spans residues 265–289; that stretch reads LRKDQQAEDDEDDELDVTEEENFLK. Acidic residues predominate over residues 271–289; it reads AEDDEDDELDVTEEENFLK.

This sequence belongs to the CIBAR family. In terms of assembly, homodimer (via BAR-like domain). Heterodimer with FAM92B (via BAR-like domains). Interacts (via BAR-like domain) with CBY1; this interaction is required for targeting FAM92A to centriole and cilium basal body. Interacts (via BAR-like domain) with CBY3; both proteins form a ninefold symmetric structure at the flagellar base; are recruited to the annulus in a mutually dependent manner and regulate annulus positionning.

The protein localises to the cytoplasm. Its subcellular location is the cytoskeleton. The protein resides in the microtubule organizing center. It localises to the centrosome. It is found in the centriole. The protein localises to the cilium basal body. Its subcellular location is the cell projection. The protein resides in the cilium. It localises to the nucleus. It is found in the mitochondrion inner membrane. The protein localises to the flagellum. Its function is as follows. Plays a critical role in regulating mitochondrial ultrastructure and function by maintaining the integrity of mitochondrial morphology, particularly the organization of cristae. Preferentially binds to negatively charged phospholipids like cardiolipin and phosphatidylinositol 4,5-bisphosphate enhancing its interaction with mitochondrial membranes. Induces membrane curvature and tubulation, which are critical for maintaining mitochondrial ultrastructure and the organization of cristae. Plays a crucial role in ciliogenesis. May play a role in limb development through its role in ciliogenesis. Plays a key role in the correct positioning of the annulus, a septin-based ring structure in the sperm flagellum, serving both as a physical barrier and a membrane diffusion barrier that separates the midpiece (MP) from the principal piece (PP). This positioning is essential for proper sperm motility and function. Interacts with CBY3 to form a complex which localizes to the curved membrane region of the flagellar pocket. By doing so, may provide stability and rigidity to the periannular membrane to prevent membrane deformation. This function is crucial for halting annulus migration at the proximal end of the fibrous sheath-containing PP. The protein is CBY1-interacting BAR domain-containing protein 1 of Homo sapiens (Human).